The following is a 77-amino-acid chain: UPF0401 protein ECP_3010 (77 aa).

This sequence belongs to the UPF0401 family.

This Escherichia coli O6:K15:H31 (strain 536 / UPEC) protein is UPF0401 protein ECP_3010.